The sequence spans 419 residues: Protein distal antenna-related (419 aa).

Residues 15–66 (TRGKRPLRNLTPNDKVRAIQRIHNGETKASVSRDIGVPESTLRGWCKNEQKL) enclose the HTH psq-type domain. Positions 42–62 (KASVSRDIGVPESTLRGWCKN) form a DNA-binding region, H-T-H motif. Disordered stretches follow at residues 333–359 (QPGGGGPGGPSYNPNQMASGGSEPDLE) and 378–419 (EASN…DAEQ).

Interacts with itself, dan, ey and dac to form a complex (or complexes) containing the RD factors. Coexpressed with dan in the presumptive distal antenna, but not in the leg imaginal disk. Both proteins are also expressed in the brain and the eye region of the eye-antenna disk. First detected in early L3 eye disks in cells surrounding the newly initiated morphogenetic furrow. Highly expressed in evenly spaced clusters of cells anterior to the furrow, lower levels within and posterior to the furrow.

The protein localises to the nucleus. Its function is as follows. Probable transcription factor with a role in the retinal determination (RD) network. Regulates ato expression and is required for normal R8 induction and differentiation. Danr appears to repress Dan expression, but Dan is required for Danr expression anterior to the morphogenetic furrow (MF). Dan and Danr lie downstream of so and require dac function for highest levels of expression. Contributes to differentiation of antenna-specific characteristics; effector gene that acts downstream of homothorax (hth), Distal-less (Dll), cut (ct) and spineless (ss) genes to control differentiation of distal antennal structures. This is Protein distal antenna-related from Drosophila melanogaster (Fruit fly).